Here is a 505-residue protein sequence, read N- to C-terminus: L-carnitine/gamma-butyrobetaine antiporter (505 aa).

The next 12 helical transmembrane spans lie at Ile-10 to Val-30, Trp-51 to Phe-71, Ile-92 to Ile-112, Gly-143 to Val-163, Phe-195 to Val-215, Leu-231 to Leu-251, Ser-263 to Met-283, Trp-316 to Ala-336, Leu-347 to Gly-367, Leu-403 to Ile-423, Leu-446 to Leu-466, and Ala-475 to Ile-495.

It belongs to the BCCT transporter (TC 2.A.15) family. CaiT subfamily. As to quaternary structure, homotrimer.

The protein resides in the cell inner membrane. The catalysed reaction is 4-(trimethylamino)butanoate(in) + (R)-carnitine(out) = 4-(trimethylamino)butanoate(out) + (R)-carnitine(in). It functions in the pathway amine and polyamine metabolism; carnitine metabolism. Catalyzes the exchange of L-carnitine for gamma-butyrobetaine. The sequence is that of L-carnitine/gamma-butyrobetaine antiporter from Salmonella paratyphi A (strain ATCC 9150 / SARB42).